The primary structure comprises 254 residues: Receptor expression-enhancing protein 2 (254 aa).

2 helical membrane passes run 1–21 and 35–55; these read MVSWIISRLVVLIFGTLYPAY and YVKWMMYWIVFAFFTTAETLT. At serine 152 the chain carries Phosphoserine. Residues 164 to 254 form a disordered region; that stretch reads ALPLQGPDGR…KKTSAGGDSA (91 aa). Residues 195-204 are compositionally biased toward polar residues; sequence SVRSGTNQAD. Residues 205–219 show a composition bias toward basic and acidic residues; the sequence is PRTEISEDDTGDKAP.

It belongs to the DP1 family. As to quaternary structure, interacts with odorant receptor proteins.

The protein resides in the membrane. Its function is as follows. Required for endoplasmic reticulum (ER) network formation, shaping and remodeling. May enhance the cell surface expression of odorant receptors. This chain is Receptor expression-enhancing protein 2 (REEP2), found in Bos taurus (Bovine).